The sequence spans 152 residues: uncharacterized protein (152 aa).

This is an uncharacterized protein from Acanthamoeba polyphaga (Amoeba).